Consider the following 335-residue polypeptide: Succinylglutamate desuccinylase (335 aa).

3 residues coordinate Zn(2+): His-59, Glu-62, and His-151. Residue Glu-215 is part of the active site.

It belongs to the AspA/AstE family. Succinylglutamate desuccinylase subfamily. Requires Zn(2+) as cofactor.

It catalyses the reaction N-succinyl-L-glutamate + H2O = L-glutamate + succinate. Its pathway is amino-acid degradation; L-arginine degradation via AST pathway; L-glutamate and succinate from L-arginine: step 5/5. Functionally, transforms N(2)-succinylglutamate into succinate and glutamate. The protein is Succinylglutamate desuccinylase of Pseudomonas putida (strain ATCC 47054 / DSM 6125 / CFBP 8728 / NCIMB 11950 / KT2440).